The chain runs to 462 residues: Receptor like protein 29 (462 aa).

The signal sequence occupies residues 1–26 (MTMKRALPSPSSLLFFFLLITPLFLC). Over 27–441 (QENRVSASMP…SQASRYYRSC (415 aa)) the chain is Extracellular. N-linked (GlcNAc...) asparagine glycosylation occurs at N139. LRR repeat units lie at residues 139-164 (NSSLQQLSLRSNPSLSGQIPPRISSL), 165-188 (KSLQILTLSQNRLTGDIPPAIFSL), 190-212 (SLVHLDLSYNKLTGKIPLQLGNL), 213-236 (NNLVGLDLSYNSLTGTIPPTISQL), 238-260 (MLQKLDLSSNSLFGRIPEGVEKL), 261-284 (RSLSFMALSNNKLKGAFPKGISNL), 286-308 (SLQYFIMDNNPMFVALPVELGFL), 309-331 (PKLQELQLENSGYSGVIPESYTK), 332-355 (LTNLSSLSLANNRLTGEIPSGFES), and 357-381 (PHVFHLNLSRNLLIGVVPFDSSFLR). Residues N334, N363, and N416 are each glycosylated (N-linked (GlcNAc...) asparagine). A helical membrane pass occupies residues 442–462 (FFANALFPFALFLGLHQRWVL).

This sequence belongs to the RLP family.

It is found in the cell membrane. This is Receptor like protein 29 from Arabidopsis thaliana (Mouse-ear cress).